The sequence spans 464 residues: MLINRIEKDTIGEVELPKKCLWGSQTQRSIYNFNISTEKMPYELIHALVQIKLVAAKVNKDLKLLEEKKADAIIKASEEILSGKYKDSFPLVIWQTGSGTQTNMNVNEVIANIAIKLLGGKYGDYSIIHPNDHVNKSQSSNDVFPTAMHISAVLSLKKNLLPNLIKLKKSFYDKSILFKDIIKIGRTHLQDATPLTLGQEVSSWYCMLKKNIKYIKNSILCISEIALGGTAVGTGLNAHEKYSLKASKLLSEINKHNFISSTNKFESLSTCDAIVKVHSTLKNLSISIMKISNDIRWLSSGPRCGIGELIIPENEPGSSIMPGKVNPTQCESISMICCQVIGNDSAIGIGGLSGNFQLNVFRPMIIYNFLQSVRILSDGIKSFNKKCVIGIKPNIKRIKKFLKESLMLVTSLTPHIGYDKSAKIAKLAHNENITLKEACLKLNYISESQFDILVRPENMIGNKN.

Residues 98–100, 129–132, 139–141, and Thr187 each bind substrate; these read SGT, HPND, and SSN. The active-site Proton donor/acceptor is His188. Residue Ser318 is part of the active site. Residues Ser319 and 324–326 contribute to the substrate site; that span reads KVN.

Belongs to the class-II fumarase/aspartase family. Fumarase subfamily. In terms of assembly, homotetramer.

The protein localises to the cytoplasm. The enzyme catalyses (S)-malate = fumarate + H2O. It participates in carbohydrate metabolism; tricarboxylic acid cycle; (S)-malate from fumarate: step 1/1. Its function is as follows. Involved in the TCA cycle. Catalyzes the stereospecific interconversion of fumarate to L-malate. In Wigglesworthia glossinidia brevipalpis, this protein is Fumarate hydratase class II.